A 1016-amino-acid polypeptide reads, in one-letter code: Vacuolar membrane protease (1016 aa).

Residues 1–36 (MAETESGTGNSPSHRLSETSNASGNRSHQQSKQIAS) are disordered. Topologically, residues 1–57 (MAETESGTGNSPSHRLSETSNASGNRSHQQSKQIASYKSSKPNVFIRFIRAIFGYRK) are cytoplasmic. A helical membrane pass occupies residues 58–78 (TSVTLFVFITIIATLILVELS). Residues 79–408 (NSLDFSVKLP…FVIPASQLVL (330 aa)) are Vacuolar-facing. N-linked (GlcNAc...) asparagine glycosylation is found at Asn-147 and Asn-177. The Zn(2+) site is built by His-191 and Asp-203. Glu-238 serves as the catalytic Proton acceptor. Glu-239, Glu-264, and His-337 together coordinate Zn(2+). Residues 409 to 429 (INVTCLAVIPLISLPLLVIIF) form a helical membrane-spanning segment. Residues 430–438 (NYKKNWHIG) are Cytoplasmic-facing. The helical transmembrane segment at 439 to 459 (FINAIKFPVSLVLSICILNII) threads the bilayer. Residues 460–481 (THNVIASINEFLPNSSYDSIVS) are Vacuolar-facing. N-linked (GlcNAc...) asparagine glycosylation is present at Asn-473. The chain crosses the membrane as a helical span at residues 482–502 (TLYSLFLLLNYLFLNGINFIF). Over 503-511 (KGYKGLYHD) the chain is Cytoplasmic. The chain crosses the membrane as a helical span at residues 512–532 (EKLILIIQTSFIYWVLLIVST). Residues 533–547 (NKLSKNKIGNDHTGE) are Vacuolar-facing. The helical transmembrane segment at 548 to 568 (FPLIMLFLLQSIGALFGLFSW) threads the bilayer. The Cytoplasmic portion of the chain corresponds to 569–646 (SFKKTTPDEL…SFSYDWSIQY (78 aa)). A disordered region spans residues 598–622 (YGSNEAELESGEPISSNSSVSLNSS). The span at 612–622 (SSNSSVSLNSS) shows a compositional bias: low complexity. A helical transmembrane segment spans residues 647-667 (VVIVPLSSLIVYNTGSLLLSG). Topologically, residues 668–681 (LNKSIQESLNAEKL) are vacuolar. Residue Asn-669 is glycosylated (N-linked (GlcNAc...) asparagine). A helical membrane pass occupies residues 682-702 (IFDLIQLVAVTLAIPFLPFIF). The Cytoplasmic segment spans residues 703-706 (KINR). The helical transmembrane segment at 707–727 (LLVTALVLVFCSGFISIFLKS) threads the bilayer. Topologically, residues 728-1016 (PFDQLNPLKL…LVSVSKYVEI (289 aa)) are vacuolar. N-linked (GlcNAc...) asparagine glycosylation is found at Asn-778, Asn-821, Asn-850, Asn-875, and Asn-977.

This sequence belongs to the peptidase M28 family. The cofactor is Zn(2+).

It localises to the vacuole membrane. May be involved in vacuolar sorting and osmoregulation. In Debaryomyces hansenii (strain ATCC 36239 / CBS 767 / BCRC 21394 / JCM 1990 / NBRC 0083 / IGC 2968) (Yeast), this protein is Vacuolar membrane protease.